The following is a 563-amino-acid chain: Cystathionine gamma-synthase-like protein ankD (563 aa).

The interval 1–37 is disordered; that stretch reads MGELGPASAQHGSDSISFSGSYTQPLGAPQPPNEPHA. Residues 10 to 24 show a composition bias toward polar residues; the sequence is QHGSDSISFSGSYTQ.

Belongs to the trans-sulfuration enzymes family. MET7 subfamily. Requires pyridoxal 5'-phosphate as cofactor.

The enzyme catalyses cyclo(L-arginyl-(Z)-dehydro-3,4-dihydroxytyrosyl) + O-acetyl-L-homoserine = cyclo(L-arginyl-(Z)-dehydro-4-O-homoseryl-tyrosyl) + acetate + H(+). The protein operates within secondary metabolite biosynthesis. Its function is as follows. Cystathionine gamma-synthase-like protein; part of the ank cluster that mediates the biosynthesis of NK13650 C, a highly modified cyclo-arginine-tyrosine dipeptide. AnkD catalyzes the attachment of L-homoserine moiety using O-acetyl-L-homoserine as co-substrate. Within the pathway, the cyclodipeptide synthase ankA acts as the scaffold-generating enzyme and is responsible for formation of the cyclo-Arg-Tyr diketopiperazine (cRY) from L-Arg and L-Tyr. The ankA product cRY is desaturated by the cytochrome P450 monooxygenase ankB to yield a dehydro-cyclodipeptide intermediate. The FAD-dependent monooxygenase ankC then installs the m-OH, ankD catalyzes the attachment of L-homoserine, and ankE ligates citrate to the ankD product to yield NK13650 B. The O-methyltransferase ankF is responsible for methylation of the C-17 phenol group of NK13650 B to produce NK13650 D. Amidation of NK13650 D with L-Asp by ankG then leads to the production of NK13650 C, whereas amidation of NK13650 B produces NK13650 A. The polypeptide is Cystathionine gamma-synthase-like protein ankD (Aspergillus thermomutatus (Neosartorya pseudofischeri)).